Consider the following 122-residue polypeptide: Small ribosomal subunit protein uS13 (122 aa).

Residues 95–122 (SLPVRGQRTHTNARTRKGPAKSIAGKKK) are disordered.

The protein belongs to the universal ribosomal protein uS13 family. As to quaternary structure, part of the 30S ribosomal subunit. Forms a loose heterodimer with protein S19. Forms two bridges to the 50S subunit in the 70S ribosome.

Located at the top of the head of the 30S subunit, it contacts several helices of the 16S rRNA. In the 70S ribosome it contacts the 23S rRNA (bridge B1a) and protein L5 of the 50S subunit (bridge B1b), connecting the 2 subunits; these bridges are implicated in subunit movement. Contacts the tRNAs in the A and P-sites. The chain is Small ribosomal subunit protein uS13 from Mesorhizobium japonicum (strain LMG 29417 / CECT 9101 / MAFF 303099) (Mesorhizobium loti (strain MAFF 303099)).